The chain runs to 209 residues: Large ribosomal subunit protein uL3 (209 aa).

Q150 carries the N5-methylglutamine modification.

Belongs to the universal ribosomal protein uL3 family. Part of the 50S ribosomal subunit. Forms a cluster with proteins L14 and L19. Methylated by PrmB.

Its function is as follows. One of the primary rRNA binding proteins, it binds directly near the 3'-end of the 23S rRNA, where it nucleates assembly of the 50S subunit. The chain is Large ribosomal subunit protein uL3 from Aliivibrio salmonicida (strain LFI1238) (Vibrio salmonicida (strain LFI1238)).